The primary structure comprises 340 residues: ATP-dependent 6-phosphofructokinase (340 aa).

Residue G11 coordinates ATP. R21–R25 provides a ligand contact to ADP. Residues R72–Y73 and G102–S105 contribute to the ATP site. D103 contacts Mg(2+). A substrate-binding site is contributed by T125–D127. D127 functions as the Proton acceptor in the catalytic mechanism. ADP is bound at residue R154. Residues R162 and M169–R171 each bind substrate. ADP-binding positions include G185–D187, K211, and K213–H215. Residues E222, R244, and H250–R253 each bind substrate.

Belongs to the phosphofructokinase type A (PFKA) family. ATP-dependent PFK group I subfamily. Prokaryotic clade 'B1' sub-subfamily. As to quaternary structure, homotetramer. Requires Mg(2+) as cofactor.

The protein resides in the cytoplasm. The enzyme catalyses beta-D-fructose 6-phosphate + ATP = beta-D-fructose 1,6-bisphosphate + ADP + H(+). The protein operates within carbohydrate degradation; glycolysis; D-glyceraldehyde 3-phosphate and glycerone phosphate from D-glucose: step 3/4. Allosterically activated by ADP and other diphosphonucleosides, and allosterically inhibited by phosphoenolpyruvate. Functionally, catalyzes the phosphorylation of D-fructose 6-phosphate to fructose 1,6-bisphosphate by ATP, the first committing step of glycolysis. The polypeptide is ATP-dependent 6-phosphofructokinase (Lactococcus lactis subsp. lactis (Streptococcus lactis)).